The primary structure comprises 123 residues: MIKRPRWQYVLLIALALLALATLLVPCMVRTESELRIRAGQQGLSLPDGFYVYQRLDQRGIRIKSITPEGDGLVIRLDSPEQQLLAREALQNILPPGYIIALSESPVPTHWVREFARAPLNLG.

The Cytoplasmic portion of the chain corresponds to 1-8 (MIKRPRWQ). Residues 9–29 (YVLLIALALLALATLLVPCMV) traverse the membrane as a helical segment. Over 30-123 (RTESELRIRA…EFARAPLNLG (94 aa)) the chain is Periplasmic.

Belongs to the MzrA family. Interacts with EnvZ.

Its subcellular location is the cell inner membrane. Modulates the activity of the EnvZ/OmpR two-component regulatory system, probably by directly modulating EnvZ enzymatic activity and increasing stability of phosphorylated OmpR. In Serratia proteamaculans (strain 568), this protein is Modulator protein MzrA.